We begin with the raw amino-acid sequence, 286 residues long: 4-hydroxybenzoate octaprenyltransferase (286 aa).

7 helical membrane-spanning segments follow: residues glycine 21 to methionine 40, isoleucine 95 to valine 115, phenylalanine 142 to valine 162, tryptophan 167 to valine 187, isoleucine 211 to glutamate 231, leucine 235 to phenylalanine 255, and phenylalanine 266 to isoleucine 286.

This sequence belongs to the UbiA prenyltransferase family. Mg(2+) is required as a cofactor.

The protein localises to the cell inner membrane. The enzyme catalyses all-trans-octaprenyl diphosphate + 4-hydroxybenzoate = 4-hydroxy-3-(all-trans-octaprenyl)benzoate + diphosphate. It functions in the pathway cofactor biosynthesis; ubiquinone biosynthesis. Its function is as follows. Catalyzes the prenylation of para-hydroxybenzoate (PHB) with an all-trans polyprenyl group. Mediates the second step in the final reaction sequence of ubiquinone-8 (UQ-8) biosynthesis, which is the condensation of the polyisoprenoid side chain with PHB, generating the first membrane-bound Q intermediate 3-octaprenyl-4-hydroxybenzoate. The protein is 4-hydroxybenzoate octaprenyltransferase of Shewanella putrefaciens (strain CN-32 / ATCC BAA-453).